The chain runs to 127 residues: UPF0102 protein Paes_0016 (127 aa).

The protein belongs to the UPF0102 family.

This Prosthecochloris aestuarii (strain DSM 271 / SK 413) protein is UPF0102 protein Paes_0016.